Reading from the N-terminus, the 501-residue chain is Glycogenin-2 (501 aa).

The UDP site is built by Leu-42, Thr-44, Asn-45, Tyr-48, and Arg-110. The UDP-alpha-D-glucose site is built by Leu-42, Thr-44, Asn-45, Tyr-48, Arg-110, Lys-119, Asp-135, Ala-136, Asp-137, Asn-166, Ser-167, Asp-193, Asp-196, and Gln-197. Residues Asp-135, Ala-136, and Asp-137 each coordinate UDP. Residue Asp-135 coordinates Mn(2+). Residue Asp-137 coordinates Mn(2+). An O-linked (Glc...) tyrosine glycan is attached at Tyr-228. 3 residues coordinate UDP: His-245, Gly-248, and Lys-251. Residue His-245 coordinates Mn(2+). 2 residues coordinate UDP-alpha-D-glucose: Gly-248 and Lys-251. Residues Ser-368, Ser-399, and Ser-459 each carry the phosphoserine modification.

In terms of assembly, homodimer, tightly complexed to glycogen synthase. Mn(2+) is required as a cofactor. Self-glycosylated by the transfer of glucose residues from UDP-glucose to itself, forming an alpha-1,4-glycan of around 10 residues attached to Tyr-228. As to expression, detected in liver (at protein level). Expressed preferentially in liver, heart, and pancreas.

It is found in the cytoplasm. Its subcellular location is the nucleus. It carries out the reaction L-tyrosyl-[glycogenin] + UDP-alpha-D-glucose = alpha-D-glucosyl-L-tyrosyl-[glycogenin] + UDP + H(+). The enzyme catalyses [1,4-alpha-D-glucosyl](n)-L-tyrosyl-[glycogenin] + UDP-alpha-D-glucose = [1,4-alpha-D-glucosyl](n+1)-L-tyrosyl-[glycogenin] + UDP + H(+). It participates in glycan biosynthesis; glycogen biosynthesis. Glycogenin participates in the glycogen biosynthetic process along with glycogen synthase and glycogen branching enzyme. It catalyzes the formation of a short alpha (1,4)-glucosyl chain covalently attached via a glucose 1-O-tyrosyl linkage to internal tyrosine residues and these chains act as primers for the elongation reaction catalyzed by glycogen synthase. This is Glycogenin-2 (GYG2) from Homo sapiens (Human).